The chain runs to 93 residues: Protein translocase subunit SecE (93 aa).

The segment at 1 to 33 is disordered; that stretch reads MTDALGSIDMPDAEDETREKKARKGGKRGKKGP. Positions 20–33 are enriched in basic residues; it reads KKARKGGKRGKKGP. A helical transmembrane segment spans residues 64 to 84; sequence TVVIVFVVIMIGLVTVIDFGF.

It belongs to the SecE/SEC61-gamma family. As to quaternary structure, component of the Sec protein translocase complex. Heterotrimer consisting of SecY, SecE and SecG subunits. The heterotrimers can form oligomers, although 1 heterotrimer is thought to be able to translocate proteins. Interacts with the ribosome. Interacts with SecDF, and other proteins may be involved. Interacts with SecA.

The protein localises to the cell membrane. Functionally, essential subunit of the Sec protein translocation channel SecYEG. Clamps together the 2 halves of SecY. May contact the channel plug during translocation. This Streptomyces virginiae (Streptomyces cinnamonensis) protein is Protein translocase subunit SecE.